The chain runs to 349 residues: Anthranilate phosphoribosyltransferase (349 aa).

Residues Gly82, 85–86 (GD), 92–95 (NVST), 110–118 (KHGNRAVSG), and Ser122 contribute to the 5-phospho-alpha-D-ribose 1-diphosphate site. Gly82 serves as a coordination point for anthranilate. Ser94 contributes to the Mg(2+) binding site. Asn113 is an anthranilate binding site. An anthranilate-binding site is contributed by Arg168. Positions 227 and 228 each coordinate Mg(2+).

The protein belongs to the anthranilate phosphoribosyltransferase family. In terms of assembly, homodimer. Mg(2+) serves as cofactor.

It catalyses the reaction N-(5-phospho-beta-D-ribosyl)anthranilate + diphosphate = 5-phospho-alpha-D-ribose 1-diphosphate + anthranilate. It functions in the pathway amino-acid biosynthesis; L-tryptophan biosynthesis; L-tryptophan from chorismate: step 2/5. Its function is as follows. Catalyzes the transfer of the phosphoribosyl group of 5-phosphorylribose-1-pyrophosphate (PRPP) to anthranilate to yield N-(5'-phosphoribosyl)-anthranilate (PRA). The sequence is that of Anthranilate phosphoribosyltransferase from Pseudomonas savastanoi pv. phaseolicola (strain 1448A / Race 6) (Pseudomonas syringae pv. phaseolicola (strain 1448A / Race 6)).